Consider the following 239-residue polypeptide: MLPIIGIAGNQLIRATDTFQGNQVTYTPQGFVNAVQQADGLPIVLPISSPKTASAYIDQIDKLILAGGQDISPQLYHEPPHPKLLETNLQRDLFEAALISEALKQNKPIFAVCRGMQLLNVVLGGSLYQDLTTYPKWSVKHEQHPTAPQFATHEVEILPDTLLYQLLPDTYLVNSYHHQALKELAPSLKATAFSPDGLVEGIESLDKDVRLFGVQWHPELTHSSNSTDQGLFDFFVQEF.

The Glutamine amidotransferase type-1 domain maps to 12–239; that stretch reads LIRATDTFQG…GLFDFFVQEF (228 aa). C113 acts as the Nucleophile in catalysis. Residues H217 and E219 contribute to the active site.

The chain is Protein NtpR (ntpR) from Enterococcus hirae (strain ATCC 9790 / DSM 20160 / JCM 8729 / LMG 6399 / NBRC 3181 / NCIMB 6459 / NCDO 1258 / NCTC 12367 / WDCM 00089 / R).